The chain runs to 1394 residues: Kinesin-like protein KIF27 (1394 aa).

The 337-residue stretch at 5-341 (PIKVAVRIRP…LKYANRARNI (337 aa)) folds into the Kinesin motor domain. Position 84-91 (84-91 (GQTGSGKT)) interacts with ATP. Coiled coils occupy residues 352–418 (QADR…IEQA) and 498–554 (QKDL…ELAK). Disordered stretches follow at residues 559 to 582 (VPTS…RPHT) and 642 to 665 (FSDN…RSHS). Residues 571–580 (PDARASEKRP) show a composition bias toward basic and acidic residues. Residues Ser-643, Ser-646, Ser-672, Ser-675, and Ser-704 each carry the phosphoserine modification. Coiled coils occupy residues 709–891 (LQKL…GQGE), 921–1078 (LDEQ…SIQS), 1118–1152 (NKVI…HELE), and 1186–1226 (DQDG…RLKD). The tract at residues 886-916 (KAGQGEGLNPKAEDQDGFNLNRRKSPFRSGD) is disordered. Ser-999 is modified (phosphoserine). Positions 1267–1280 (TENTKLNGSEREVD) are enriched in basic and acidic residues. Disordered regions lie at residues 1267–1319 (TENT…LQSI) and 1325–1344 (ARPF…PVRS). Composition is skewed to polar residues over residues 1281 to 1295 (NSSS…TQQI) and 1309 to 1319 (IAPSSGQLQSI). Phosphoserine is present on residues Ser-1365 and Ser-1387.

The protein belongs to the TRAFAC class myosin-kinesin ATPase superfamily. Kinesin family. KIF27 subfamily. As to quaternary structure, interacts with STK36.

It localises to the cytoplasm. The protein resides in the cytoskeleton. The protein localises to the cell projection. Its subcellular location is the cilium. Functionally, plays an essential role in motile ciliogenesis. The sequence is that of Kinesin-like protein KIF27 (Kif27) from Mus musculus (Mouse).